The following is a 127-amino-acid chain: Small ribosomal subunit protein uS13 (127 aa).

The segment at 93-127 (RRSLPVRGQRTHTNARTRKGPRKGTVANKKKATAK) is disordered.

The protein belongs to the universal ribosomal protein uS13 family. As to quaternary structure, part of the 30S ribosomal subunit. Forms a loose heterodimer with protein S19. Forms two bridges to the 50S subunit in the 70S ribosome.

Functionally, located at the top of the head of the 30S subunit, it contacts several helices of the 16S rRNA. In the 70S ribosome it contacts the 23S rRNA (bridge B1a) and protein L5 of the 50S subunit (bridge B1b), connecting the 2 subunits; these bridges are implicated in subunit movement. Contacts the tRNAs in the A and P-sites. In Koribacter versatilis (strain Ellin345), this protein is Small ribosomal subunit protein uS13.